The chain runs to 446 residues: MAAQVTPELANLNSKPEGGAPPKQVPVKDVPENEDVESDDDNEGDQGAGEPGSTGAAKKKKKKKPKKKKKGGPKVQTEPPRVILSSIFPNNDYPVGELVEYKDDNAYRTTNEEKRYLDRMNNDFLSEYRYAAEVHRQVRQYAQKTIKPGQTLTEIAEGIEDSVRALTGHDGLTEGDNLLGGIAFPTGVNLNHCAAHYSPNAGNKMVLQYEDVMKVDFGVHINGRIVDSAFTVAFDPVYDNLLAAVKDATNTGIREAGIDVRMSDIGAAIQETMESYEVEIKGTTYPVKPIRNLNGHTIGQFEIHGGKNGKSVPIVKGGDQSKMEEGEVYAIETFGSTGRGYVRDDMETSHYAKVPDAPNVPLRLSSAKNLLNVITKNFGTLPFCRRYLDRLGQDKYLLGLNNLVANGIVDAYPPLCDIKGSYTAQFEHTILLRPNIKEVISRGYDY.

The tract at residues 1 to 88 is disordered; the sequence is MAAQVTPELA…PPRVILSSIF (88 aa). The span at 32–44 shows a compositional bias: acidic residues; it reads ENEDVESDDDNEG. The segment covering 57–72 has biased composition (basic residues); it reads AKKKKKKKPKKKKKGG. Residue His196 participates in substrate binding. A divalent metal cation contacts are provided by Asp216, Asp227, and His296. Residue His304 coordinates substrate. Residues Glu332 and Glu427 each coordinate a divalent metal cation.

Belongs to the peptidase M24A family. Methionine aminopeptidase eukaryotic type 2 subfamily. Requires Co(2+) as cofactor. Zn(2+) serves as cofactor. Mn(2+) is required as a cofactor. The cofactor is Fe(2+).

It localises to the cytoplasm. The catalysed reaction is Release of N-terminal amino acids, preferentially methionine, from peptides and arylamides.. Functionally, cotranslationally removes the N-terminal methionine from nascent proteins. The N-terminal methionine is often cleaved when the second residue in the primary sequence is small and uncharged (Met-Ala-, Cys, Gly, Pro, Ser, Thr, or Val). This chain is Methionine aminopeptidase 2-1, found in Blastomyces gilchristii (strain SLH14081) (Blastomyces dermatitidis).